The primary structure comprises 112 residues: Small ribosomal subunit protein bS6 (112 aa).

Belongs to the bacterial ribosomal protein bS6 family.

Binds together with bS18 to 16S ribosomal RNA. The protein is Small ribosomal subunit protein bS6 of Christiangramia forsetii (strain DSM 17595 / CGMCC 1.15422 / KT0803) (Gramella forsetii).